Here is a 668-residue protein sequence, read N- to C-terminus: Kinesin-like protein KIF2B (668 aa).

Thr125 is modified (phosphothreonine; by PLK1). Residues 149-177 (CLREIEKLQKQREKRRRLQLEIRARRALD) adopt a coiled-coil conformation. Ser204 is subject to Phosphoserine; by PLK1. Residues 213–543 (RICVCVRKRP…LRYANRVKEL (331 aa)) form the Kinesin motor domain. Residue 303–310 (GQTGSGKT) participates in ATP binding. The span at 585–604 (PTVEKEEEKESDELTSKKEP) shows a compositional bias: basic and acidic residues. The segment at 585 to 605 (PTVEKEEEKESDELTSKKEPA) is disordered. Residues 646–667 (VLTDIQKKLQSLREDLQKKSQV) adopt a coiled-coil conformation.

Belongs to the TRAFAC class myosin-kinesin ATPase superfamily. Kinesin family. MCAK/KIF2 subfamily. Phosphorylation at Thr-125 by PLK1 is required for activity in the correction of kinetochore-microtubules attachment errors, while phosphorylation at Ser-204 also by PLK1 is required for the kinetochore localization and activity in prometaphase.

It localises to the cytoplasm. The protein localises to the cytoskeleton. The protein resides in the microtubule organizing center. Its subcellular location is the centrosome. It is found in the spindle. It localises to the chromosome. The protein localises to the centromere. The protein resides in the kinetochore. In terms of biological role, plus end-directed microtubule-dependent motor required for spindle assembly and chromosome movement during mitosis. Has microtubule depolymerization activity. Plays a role in chromosome congression. The sequence is that of Kinesin-like protein KIF2B (Kif2b) from Mus musculus (Mouse).